A 258-amino-acid chain; its full sequence is PF03932 family protein CutC (258 aa).

It belongs to the CutC family.

The protein resides in the cytoplasm. This Mesorhizobium japonicum (strain LMG 29417 / CECT 9101 / MAFF 303099) (Mesorhizobium loti (strain MAFF 303099)) protein is PF03932 family protein CutC.